Consider the following 427-residue polypeptide: TNF receptor-associated factor family protein DDB_G0285149 (427 aa).

Residues 20-65 form an RING-type zinc finger; that stretch reads CIVCTDLLSESHDKIQVNQCPHGHCLCSDCWTKQIENKKKECPICR. TRAF-type zinc fingers lie at residues 122-178 and 178-234; these read THFK…INKD and DHLE…KHQA. The MATH domain occupies 284–415; the sequence is KYSNQWVIEN…GNKLTIKFEI (132 aa).

The protein belongs to the TNF receptor-associated factor family. A subfamily.

It localises to the cytoplasm. Functionally, probable adapter protein and signal transducer that links members of the tumor necrosis factor receptor family to different signaling pathways by association with the receptor cytoplasmic domain and kinases. This is TNF receptor-associated factor family protein DDB_G0285149 from Dictyostelium discoideum (Social amoeba).